Here is a 129-residue protein sequence, read N- to C-terminus: Small ribosomal subunit protein uS11 (129 aa).

It belongs to the universal ribosomal protein uS11 family. As to quaternary structure, part of the 30S ribosomal subunit. Interacts with proteins S7 and S18. Binds to IF-3.

Functionally, located on the platform of the 30S subunit, it bridges several disparate RNA helices of the 16S rRNA. Forms part of the Shine-Dalgarno cleft in the 70S ribosome. This is Small ribosomal subunit protein uS11 from Hydrogenovibrio crunogenus (strain DSM 25203 / XCL-2) (Thiomicrospira crunogena).